The following is a 332-amino-acid chain: MLQVSVIGTGSWGTALANVLSENQHDVLMWGKTQTTVNEINTHHTNAKYLKDTQLHHALKATSNIQQAVLHAKIIIIAVPTKAIRSVMQQINEVANEKKVFIHVSKGIEPTTFKRISEMITEEMDPEKFQGVGVLSGPSHAEELALKHPTTVAVASDDKQIRQIAQDIFMNSYFRIYTNDDLIGVEIGGALKNIIALAAGITDGLGYGDNAKAALMTRGLAEITRLGTKMGADPLTFLGLAGIGDLIVTCTSVHSRNWKCGNMLGKGASLDEALAQMGMVVEGVRTTQAANEMAQAFGVEMPITQSLYKLLFEGLDVNEGVKNLMNREKTNE.

Residues serine 11, tryptophan 12, lysine 32, and lysine 106 each coordinate NADPH. Sn-glycerol 3-phosphate contacts are provided by lysine 106, glycine 137, and serine 139. An NADPH-binding site is contributed by alanine 141. Sn-glycerol 3-phosphate is bound by residues lysine 192, aspartate 245, serine 255, arginine 256, and asparagine 257. Lysine 192 acts as the Proton acceptor in catalysis. Arginine 256 serves as a coordination point for NADPH. NADPH-binding residues include valine 280 and glutamate 282.

This sequence belongs to the NAD-dependent glycerol-3-phosphate dehydrogenase family.

It localises to the cytoplasm. It carries out the reaction sn-glycerol 3-phosphate + NAD(+) = dihydroxyacetone phosphate + NADH + H(+). It catalyses the reaction sn-glycerol 3-phosphate + NADP(+) = dihydroxyacetone phosphate + NADPH + H(+). It functions in the pathway membrane lipid metabolism; glycerophospholipid metabolism. Its function is as follows. Catalyzes the reduction of the glycolytic intermediate dihydroxyacetone phosphate (DHAP) to sn-glycerol 3-phosphate (G3P), the key precursor for phospholipid synthesis. The protein is Glycerol-3-phosphate dehydrogenase [NAD(P)+] of Macrococcus caseolyticus (strain JCSC5402) (Macrococcoides caseolyticum).